The following is a 1374-amino-acid chain: L-2-aminoadipate reductase large subunit (1374 aa).

The region spanning S828–K905 is the Carrier domain. S865 carries the post-translational modification O-(pantetheine 4'-phosphoryl)serine.

This sequence belongs to the ATP-dependent AMP-binding enzyme family. As to quaternary structure, heterodimer of an alpha and a beta subunit. It depends on pantetheine 4'-phosphate as a cofactor.

It carries out the reaction (S)-2-amino-6-oxohexanoate + NADP(+) + H2O = L-2-aminoadipate + NADPH + 2 H(+). The catalysed reaction is (S)-2-amino-6-oxohexanoate + NAD(+) + H2O = L-2-aminoadipate + NADH + 2 H(+). It catalyses the reaction (S)-2-amino-6-oxohexanoate + AMP + diphosphate + NADP(+) = L-2-aminoadipate + ATP + NADPH + H(+). It functions in the pathway amino-acid biosynthesis; L-lysine biosynthesis via AAA pathway; L-lysine from L-alpha-aminoadipate (fungal route): step 1/3. Catalyzes the activation of alpha-aminoadipate by ATP-dependent adenylation and the reduction of activated alpha-aminoadipate by NADPH. The activated alpha-aminoadipate is bound to the phosphopantheinyl group of the enzyme itself before it is reduced to (S)-2-amino-6-oxohexanoate. In Candida glabrata (strain ATCC 2001 / BCRC 20586 / JCM 3761 / NBRC 0622 / NRRL Y-65 / CBS 138) (Yeast), this protein is L-2-aminoadipate reductase large subunit (LYS2).